Consider the following 48-residue polypeptide: U-actitoxin-Cgg3 (48 aa).

3 disulfides stabilise this stretch: Cys-5/Cys-41, Cys-7/Cys-33, and Cys-23/Cys-42. Ser-46 carries the serine amide modification. Positions 47 to 48 are cleaved as a propeptide — removed in mature form; sequence GR.

It belongs to the sea anemone type 3 (BDS) potassium channel toxin family.

The protein resides in the secreted. Functionally, neurotoxin that induces paralysis when injected into crabs. May function in antimicrobial activity as it displays inhibitory activity towards the B.licheniformis enzyme subtilisin A (SUBTA) and the recombinant S.maltophilia protease 1 (rStmPr1) enzyme. Also displays inhibitory activity against various proteases including the porcine pancreatic elastase (PPE) and proteinase K (PK). This Condylactis gigantea (Giant Caribbean anemone) protein is U-actitoxin-Cgg3.